The sequence spans 104 residues: Small ribosomal subunit protein bS16 (104 aa).

The protein belongs to the bacterial ribosomal protein bS16 family.

This is Small ribosomal subunit protein bS16 from Gemmatimonas aurantiaca (strain DSM 14586 / JCM 11422 / NBRC 100505 / T-27).